The following is a 460-amino-acid chain: Asparagine--tRNA ligase (460 aa).

This sequence belongs to the class-II aminoacyl-tRNA synthetase family. In terms of assembly, homodimer.

The protein localises to the cytoplasm. The catalysed reaction is tRNA(Asn) + L-asparagine + ATP = L-asparaginyl-tRNA(Asn) + AMP + diphosphate + H(+). The sequence is that of Asparagine--tRNA ligase from Picosynechococcus sp. (strain ATCC 27264 / PCC 7002 / PR-6) (Agmenellum quadruplicatum).